A 686-amino-acid chain; its full sequence is tRNA wybutosine-synthesizing protein 4 (686 aa).

The disordered stretch occupies residues 1–22 (MGPRSRQRRTGTVQSTNDSSSL). Over residues 10-22 (TGTVQSTNDSSSL) the composition is skewed to polar residues. S-adenosyl-L-methionine is bound by residues Arg-59, Gly-89, Asp-114, 161–162 (DL), and Glu-188.

It belongs to the methyltransferase superfamily. LCMT family. As to quaternary structure, interacts with RNF144B/IBRDC2.

The enzyme catalyses 7-[(3S)-3-amino-3-carboxypropyl]wyosine(37) in tRNA(Phe) + S-adenosyl-L-methionine = 7-[(3S)-(3-amino-3-methoxycarbonyl)propyl]wyosine(37) in tRNA(Phe) + S-adenosyl-L-homocysteine. The catalysed reaction is 7-[(3S)-(3-amino-3-methoxycarbonyl)propyl]wyosine(37) in tRNA(Phe) + S-adenosyl-L-methionine + CO2 = wybutosine(37) in tRNA(Phe) + S-adenosyl-L-homocysteine + 2 H(+). It functions in the pathway tRNA modification; wybutosine-tRNA(Phe) biosynthesis. Probable S-adenosyl-L-methionine-dependent methyltransferase that acts as a component of the wybutosine biosynthesis pathway. Wybutosine is a hyper modified guanosine with a tricyclic base found at the 3'-position adjacent to the anticodon of eukaryotic phenylalanine tRNA. May methylate the carboxyl group of leucine residues to form alpha-leucine ester residues. The chain is tRNA wybutosine-synthesizing protein 4 (Lcmt2) from Rattus norvegicus (Rat).